A 251-amino-acid chain; its full sequence is Probable ATP-dependent transporter ycf16 (251 aa).

The region spanning 8 to 250 (LEIKNLKACI…ELESKGYEWL (243 aa)) is the ABC transporter domain. 40–47 (GPNGSGKS) provides a ligand contact to ATP.

This sequence belongs to the ABC transporter superfamily. Ycf16 family.

Its subcellular location is the plastid. It localises to the chloroplast. This chain is Probable ATP-dependent transporter ycf16 (ycf16), found in Trieres chinensis (Marine centric diatom).